Consider the following 128-residue polypeptide: NHP2-like protein 1 (128 aa).

The interaction with U4 snRNA and U4atac snRNA stretch occupies residues 36-48 (RKGANEATKTLNR). The interval 96-128 (SRPVIACAVTIKEGSQLKPQIQSLQQSIERLLV) is important for U4 snRNA-binding.

Belongs to the eukaryotic ribosomal protein eL8 family. Identified in the spliceosome B complex. Component of the U4/U6-U5 tri-snRNP complex. Part of the small subunit (SSU) processome, composed of more than 70 proteins and the RNA chaperone small nucleolar RNA (snoRNA) U3.

It localises to the nucleus. The protein resides in the nucleolus. Part of the small subunit (SSU) processome, first precursor of the small eukaryotic ribosomal subunit. During the assembly of the SSU processome in the nucleolus, many ribosome biogenesis factors, an RNA chaperone and ribosomal proteins associate with the nascent pre-rRNA and work in concert to generate RNA folding, modifications, rearrangements and cleavage as well as targeted degradation of pre-ribosomal RNA by the RNA exosome. Involved in pre-mRNA splicing as component of the spliceosome. Binds to the 5'-stem-loop of U4 snRNA and thereby contributes to spliceosome assembly. The protein undergoes a conformational change upon RNA-binding. Core component of box C/D small nucleolar ribonucleoprotein (snoRNP) complexes that function in methylation of multiple sites on ribosomal RNAs (rRNAs) and messenger RNAs (mRNAs). The polypeptide is NHP2-like protein 1 (Xenopus tropicalis (Western clawed frog)).